The chain runs to 190 residues: Ribosome hibernation promotion factor (190 aa).

The protein belongs to the HPF/YfiA ribosome-associated protein family. Long HPF subfamily. Interacts with 100S ribosomes.

The protein resides in the cytoplasm. Its function is as follows. Required for dimerization of active 70S ribosomes into 100S ribosomes in stationary phase; 100S ribosomes are translationally inactive and sometimes present during exponential growth. The polypeptide is Ribosome hibernation promotion factor (Rhizobium meliloti (strain 1021) (Ensifer meliloti)).